We begin with the raw amino-acid sequence, 292 residues long: MNNHFKCIGIVGHPRHPTALTTHEMLYRWLCAQGYEVIVEQQIAHELQLKNVPTGTLAEIGQQADLAVVVGGDGNMLGAARTLARYNINVIGINRGNLGFLTDLDPDNALQQLSDVLEGRYISEKRFLLEAQVCQQDRQKRISTAINEVVLHPGKVAHMIEFEVYIDETFAFSQRSDGLIISTPTGSTAYSLSAGGPILTPSLDAITLVPMFPHTLSARPLVINSSSTIRLRFSHRRSDLEISCDSQIALPIQEGEDVLIRRCDYHLNLIHPKDYSYFNTLSTKLGWSKKLF.

Residue D73 is the Proton acceptor of the active site. Residues 73 to 74 (DG), 147 to 148 (NE), H158, R175, D177, 188 to 193 (TAYSLS), and Q247 each bind NAD(+).

This sequence belongs to the NAD kinase family. Requires a divalent metal cation as cofactor.

Its subcellular location is the cytoplasm. It carries out the reaction NAD(+) + ATP = ADP + NADP(+) + H(+). Functionally, involved in the regulation of the intracellular balance of NAD and NADP, and is a key enzyme in the biosynthesis of NADP. Catalyzes specifically the phosphorylation on 2'-hydroxyl of the adenosine moiety of NAD to yield NADP. The polypeptide is NAD kinase (Salmonella dublin (strain CT_02021853)).